A 115-amino-acid polypeptide reads, in one-letter code: NADH-ubiquinone oxidoreductase chain 3 (115 aa).

3 helical membrane passes run 3–23, 55–75, and 86–106; these read LYTVIFINILLSLTLILVAFW, FFLVAITFLLFDLEIALLLPL, and TMMIMAFILVTILSLGLAYEW.

This sequence belongs to the complex I subunit 3 family. Core subunit of respiratory chain NADH dehydrogenase (Complex I) which is composed of 45 different subunits. Interacts with TMEM186. Interacts with TMEM242.

It is found in the mitochondrion inner membrane. It catalyses the reaction a ubiquinone + NADH + 5 H(+)(in) = a ubiquinol + NAD(+) + 4 H(+)(out). Its function is as follows. Core subunit of the mitochondrial membrane respiratory chain NADH dehydrogenase (Complex I) which catalyzes electron transfer from NADH through the respiratory chain, using ubiquinone as an electron acceptor. Essential for the catalytic activity of complex I. This Mus musculus (Mouse) protein is NADH-ubiquinone oxidoreductase chain 3.